Consider the following 105-residue polypeptide: uncharacterized protein (105 aa).

A helical membrane pass occupies residues 4-26 (TQILLILFVGILVTTPHDIFIII).

It is found in the membrane. This is an uncharacterized protein from Rickettsia conorii (strain ATCC VR-613 / Malish 7).